The following is a 220-amino-acid chain: Uracil-DNA glycosylase (220 aa).

Residue D61 is the Proton acceptor of the active site.

It belongs to the uracil-DNA glycosylase (UDG) superfamily. UNG family.

It localises to the cytoplasm. The catalysed reaction is Hydrolyzes single-stranded DNA or mismatched double-stranded DNA and polynucleotides, releasing free uracil.. Excises uracil residues from the DNA which can arise as a result of misincorporation of dUMP residues by DNA polymerase or due to deamination of cytosine. The sequence is that of Uracil-DNA glycosylase from Pseudoalteromonas translucida (strain TAC 125).